The following is a 339-amino-acid chain: MSTIILGIESSCDDTSAAVIKDGYLLSNVVSSQAVHEAYGGVVPELASRAHQQNIVPVVHEALKRAGVTKEELSAVAFTRGPGLMGSLLVGVSFAKGFARSLNIPMIDVNHLTGHVLAHFIKEEGEANEQPDFPFLCLLVSGGNSQIILVKAYNDMEILGQTIDDAAGEAIDKCSKVMGLGYPGGPIIDRLARQGNPKAYTFSKPHISGLDYSFSGLKTSFLYSLRDWMKEDPDFIEHHKNDLAASLEATVVDILMDKLRKAAKQYKINEVAVAGGVSANNGLRNAFREHAEKYGWKIFIPKFSYTTDNAAMIAITGYFKYQDKDFCSIEQPAYSRVTL.

Positions 111 and 115 each coordinate Fe cation. Substrate-binding positions include 139-143 (LVSGG), Asp-172, Gly-185, Asp-189, and Asn-280. Asp-308 contacts Fe cation.

Belongs to the KAE1 / TsaD family. Fe(2+) serves as cofactor.

It localises to the cytoplasm. It carries out the reaction L-threonylcarbamoyladenylate + adenosine(37) in tRNA = N(6)-L-threonylcarbamoyladenosine(37) in tRNA + AMP + H(+). Required for the formation of a threonylcarbamoyl group on adenosine at position 37 (t(6)A37) in tRNAs that read codons beginning with adenine. Is involved in the transfer of the threonylcarbamoyl moiety of threonylcarbamoyl-AMP (TC-AMP) to the N6 group of A37, together with TsaE and TsaB. TsaD likely plays a direct catalytic role in this reaction. This chain is tRNA N6-adenosine threonylcarbamoyltransferase, found in Bacteroides fragilis (strain ATCC 25285 / DSM 2151 / CCUG 4856 / JCM 11019 / LMG 10263 / NCTC 9343 / Onslow / VPI 2553 / EN-2).